The primary structure comprises 218 residues: Hypoxanthine-guanine phosphoribosyltransferase (218 aa).

Lys-69 serves as a coordination point for GMP. Lys-103 bears the N6-acetyllysine mark. A Glycyl lysine isopeptide (Lys-Gly) (interchain with G-Cter in SUMO1); alternate cross-link involves residue Lys-115. Lys-115 is covalently cross-linked (Glycyl lysine isopeptide (Lys-Gly) (interchain with G-Cter in SUMO2); alternate). Residues 134 to 142 (EDIIDTGKT), Lys-166, 186 to 188 (KFV), and Asp-194 each bind GMP. Catalysis depends on Asp-138, which acts as the Proton acceptor. A Phosphothreonine modification is found at Thr-142. Mg(2+) is bound at residue Asp-194.

This sequence belongs to the purine/pyrimidine phosphoribosyltransferase family. As to quaternary structure, homotetramer. Mg(2+) serves as cofactor.

The protein localises to the cytoplasm. The catalysed reaction is IMP + diphosphate = hypoxanthine + 5-phospho-alpha-D-ribose 1-diphosphate. It carries out the reaction GMP + diphosphate = guanine + 5-phospho-alpha-D-ribose 1-diphosphate. It participates in purine metabolism; IMP biosynthesis via salvage pathway; IMP from hypoxanthine: step 1/1. Its function is as follows. Converts guanine to guanosine monophosphate, and hypoxanthine to inosine monophosphate. Transfers the 5-phosphoribosyl group from 5-phosphoribosylpyrophosphate onto the purine. Plays a central role in the generation of purine nucleotides through the purine salvage pathway. In Rattus norvegicus (Rat), this protein is Hypoxanthine-guanine phosphoribosyltransferase (Hprt1).